Here is a 456-residue protein sequence, read N- to C-terminus: Dual-specificity RNA methyltransferase RlmN (456 aa).

Residues 1–21 (MIQRHLGQPRLIQNGGDAGGV) form a disordered region. Glu-175 acts as the Proton acceptor in catalysis. The region spanning 183–416 (DEERGAVCIS…QDAGYSAPIR (234 aa)) is the Radical SAM core domain. An intrachain disulfide couples Cys-190 to Cys-427. The [4Fe-4S] cluster site is built by Cys-197, Cys-201, and Cys-204. S-adenosyl-L-methionine-binding positions include 253-254 (GE), Ser-285, 307-309 (SLH), and Asn-384. Catalysis depends on Cys-427, which acts as the S-methylcysteine intermediate.

Belongs to the radical SAM superfamily. RlmN family. The cofactor is [4Fe-4S] cluster.

It is found in the cytoplasm. It carries out the reaction adenosine(2503) in 23S rRNA + 2 reduced [2Fe-2S]-[ferredoxin] + 2 S-adenosyl-L-methionine = 2-methyladenosine(2503) in 23S rRNA + 5'-deoxyadenosine + L-methionine + 2 oxidized [2Fe-2S]-[ferredoxin] + S-adenosyl-L-homocysteine. It catalyses the reaction adenosine(37) in tRNA + 2 reduced [2Fe-2S]-[ferredoxin] + 2 S-adenosyl-L-methionine = 2-methyladenosine(37) in tRNA + 5'-deoxyadenosine + L-methionine + 2 oxidized [2Fe-2S]-[ferredoxin] + S-adenosyl-L-homocysteine. In terms of biological role, specifically methylates position 2 of adenine 2503 in 23S rRNA and position 2 of adenine 37 in tRNAs. m2A2503 modification seems to play a crucial role in the proofreading step occurring at the peptidyl transferase center and thus would serve to optimize ribosomal fidelity. The sequence is that of Dual-specificity RNA methyltransferase RlmN from Paramagnetospirillum magneticum (strain ATCC 700264 / AMB-1) (Magnetospirillum magneticum).